Consider the following 262-residue polypeptide: GTP cyclohydrolase 1 type 2 homolog (262 aa).

The a divalent metal cation site is built by histidine 65, aspartate 102, histidine 222, and glutamate 225.

It belongs to the GTP cyclohydrolase I type 2/NIF3 family. In terms of assembly, homohexamer.

This Streptococcus pyogenes serotype M6 (strain ATCC BAA-946 / MGAS10394) protein is GTP cyclohydrolase 1 type 2 homolog.